The primary structure comprises 285 residues: Golgi phosphoprotein 3-like (285 aa).

The tract at residues 1–42 is disordered; it reads MTTLTHRARRTEISKNSEKKMESEEDSNWEKSPDNEDSGDSK. A compositionally biased stretch (basic and acidic residues) spans 10-42; the sequence is RTEISKNSEKKMESEEDSNWEKSPDNEDSGDSK. A 1,2-diacyl-sn-glycero-3-phospho-(1D-myo-inositol 4-phosphate)-binding residues include tryptophan 67 and arginine 76. At serine 112 the chain carries Phosphoserine. 2 residues coordinate a 1,2-diacyl-sn-glycero-3-phospho-(1D-myo-inositol 4-phosphate): arginine 157 and arginine 160. Residues 176-187 are beta-hairpin required for oligomerization; it reads EKQNFLLFDMTT.

The protein belongs to the GOLPH3/VPS74 family. In terms of assembly, homooligomer. Does not interact MYO18; differs from GOLPH3 by its inability to interact with MYO18. May interact with ARF1.

It localises to the golgi apparatus. Its subcellular location is the golgi stack membrane. The protein localises to the trans-Golgi network membrane. Its function is as follows. Phosphatidylinositol-4-phosphate-binding protein that may antagonize the action of GOLPH3 which is required for the process of vesicle budding at the Golgi and anterograde transport to the plasma membrane. The chain is Golgi phosphoprotein 3-like (GOLPH3L) from Homo sapiens (Human).